A 111-amino-acid chain; its full sequence is Putative ciliary rootlet coiled-coil protein-like 1 protein (111 aa).

Positions 21 to 86 form a coiled coil; it reads MELELSVTKL…RQAEQEATVA (66 aa).

It belongs to the rootletin family.

In Homo sapiens (Human), this protein is Putative ciliary rootlet coiled-coil protein-like 1 protein (CROCCP2).